Reading from the N-terminus, the 143-residue chain is Putative pre-16S rRNA nuclease (143 aa).

Belongs to the YqgF nuclease family.

The protein resides in the cytoplasm. Functionally, could be a nuclease involved in processing of the 5'-end of pre-16S rRNA. The protein is Putative pre-16S rRNA nuclease of Lactobacillus johnsonii (strain CNCM I-12250 / La1 / NCC 533).